The primary structure comprises 493 residues: MHLPSLSVALALVSSSLALPQAVLPENDVSSRAAAVKEAFSHAWDGYMKYAFPHDELLPVSNSYGDSRNGWGASAVDALSTAIVMRNATIVSQILDHIAKIDYSKTSDMVSLFETTIRYLGGMLSGYDLLKGPAADLVEDRTKVDMLLQQSKNLGDVLKFAFDTPSGVPYNNINITSHGNDGATTNGLAVTGTLVLEWTRLSDLTGDQEYAKLSQRAESYLLAPQPSSGEPFPGLVGSAISIQTGQFTNGFVSWNGGSDSFYEYLMKMYVYDPKRFATYKDRWVAAAESSIDHLASNPASRPDLTFLATYNKGSLGLSSQHLACFDGGSYLLGGTVLDRADLIDFGLKLVDGCAETYHQTLTGIGPESFGWDEKSVPADQKELYERAGFYVQSGAYILRPEVIESFYYAYRVTGKKQYRDWVWNAFENINKYCRTESGFAGLTNVNAVNGGGRYDNQESFLFAEVMKYAYLTHAPGMSSMPAAAEDKANKSRG.

The first 18 residues, 1 to 18, serve as a signal peptide directing secretion; it reads MHLPSLSVALALVSSSLA. Residues N87 and N174 are each glycosylated (N-linked (GlcNAc...) asparagine). C324 and C353 are oxidised to a cystine. Catalysis depends on E367, which acts as the Proton donor. The N-linked (GlcNAc...) asparagine glycan is linked to N489.

It belongs to the glycosyl hydrolase 47 family. As to quaternary structure, monomer. Ca(2+) serves as cofactor. The cofactor is Mg(2+).

It is found in the cytoplasmic vesicle lumen. It catalyses the reaction N(4)-(alpha-D-Man-(1-&gt;2)-alpha-D-Man-(1-&gt;2)-alpha-D-Man-(1-&gt;3)-[alpha-D-Man-(1-&gt;2)-alpha-D-Man-(1-&gt;3)-[alpha-D-Man-(1-&gt;2)-alpha-D-Man-(1-&gt;6)]-alpha-D-Man-(1-&gt;6)]-beta-D-Man-(1-&gt;4)-beta-D-GlcNAc-(1-&gt;4)-beta-D-GlcNAc)-L-asparaginyl-[protein] (N-glucan mannose isomer 9A1,2,3B1,2,3) + 4 H2O = N(4)-(alpha-D-Man-(1-&gt;3)-[alpha-D-Man-(1-&gt;3)-[alpha-D-Man-(1-&gt;6)]-alpha-D-Man-(1-&gt;6)]-beta-D-Man-(1-&gt;4)-beta-D-GlcNAc-(1-&gt;4)-beta-D-GlcNAc)-L-asparaginyl-[protein] (N-glucan mannose isomer 5A1,2) + 4 beta-D-mannose. It carries out the reaction N(4)-(alpha-D-Man-(1-&gt;2)-alpha-D-Man-(1-&gt;2)-alpha-D-Man-(1-&gt;3)-[alpha-D-Man-(1-&gt;3)-[alpha-D-Man-(1-&gt;2)-alpha-D-Man-(1-&gt;6)]-alpha-D-Man-(1-&gt;6)]-beta-D-Man-(1-&gt;4)-beta-D-GlcNAc-(1-&gt;4)-beta-D-GlcNAc)-L-asparaginyl-[protein] (N-glucan mannose isomer 8A1,2,3B1,3) + 3 H2O = N(4)-(alpha-D-Man-(1-&gt;3)-[alpha-D-Man-(1-&gt;3)-[alpha-D-Man-(1-&gt;6)]-alpha-D-Man-(1-&gt;6)]-beta-D-Man-(1-&gt;4)-beta-D-GlcNAc-(1-&gt;4)-beta-D-GlcNAc)-L-asparaginyl-[protein] (N-glucan mannose isomer 5A1,2) + 3 beta-D-mannose. It functions in the pathway protein modification; protein glycosylation. In terms of biological role, involved in the maturation of Asn-linked oligosaccharides. Progressively trims alpha-1,2-linked mannose residues from Man(9)GlcNAc(2) to produce Man(5)GlcNAc(2). In Aspergillus fumigatus (strain CBS 144.89 / FGSC A1163 / CEA10) (Neosartorya fumigata), this protein is Probable mannosyl-oligosaccharide alpha-1,2-mannosidase 1B (mns1B).